The following is a 551-amino-acid chain: Glucans biosynthesis protein D (551 aa).

Residues 1-32 (MDRRRFIKGSMAMAAVCGTSGIASLFSQAAFA) constitute a signal peptide (tat-type signal).

Belongs to the OpgD/OpgG family. Predicted to be exported by the Tat system. The position of the signal peptide cleavage has not been experimentally proven.

Its subcellular location is the periplasm. Its pathway is glycan metabolism; osmoregulated periplasmic glucan (OPG) biosynthesis. Probably involved in the control of the structural glucose backbone of osmoregulated periplasmic glucans (OPGs). The chain is Glucans biosynthesis protein D from Escherichia coli O139:H28 (strain E24377A / ETEC).